The chain runs to 602 residues: Non structural protein VP9' (602 aa).

The protein localises to the host cytoplasm. This is Non structural protein VP9' from Callospermophilus lateralis (Golden-mantled ground squirrel).